Here is a 346-residue protein sequence, read N- to C-terminus: UDP-3-O-acylglucosamine N-acyltransferase (346 aa).

The Proton acceptor role is filled by His253.

The protein belongs to the transferase hexapeptide repeat family. LpxD subfamily. Homotrimer.

It catalyses the reaction a UDP-3-O-[(3R)-3-hydroxyacyl]-alpha-D-glucosamine + a (3R)-hydroxyacyl-[ACP] = a UDP-2-N,3-O-bis[(3R)-3-hydroxyacyl]-alpha-D-glucosamine + holo-[ACP] + H(+). It participates in bacterial outer membrane biogenesis; LPS lipid A biosynthesis. Catalyzes the N-acylation of UDP-3-O-acylglucosamine using 3-hydroxyacyl-ACP as the acyl donor. Is involved in the biosynthesis of lipid A, a phosphorylated glycolipid that anchors the lipopolysaccharide to the outer membrane of the cell. The chain is UDP-3-O-acylglucosamine N-acyltransferase from Rickettsia peacockii (strain Rustic).